The chain runs to 539 residues: Tyrosine-protein kinase csk-1 (539 aa).

The SH3 domain occupies 43–110 (SPGNDVIVTR…HADCVVRING (68 aa)). The segment at 129 to 148 (PGAASTTSSTSSHHSTAANH) is disordered. Residues 131–146 (AASTTSSTSSHHSTAA) show a composition bias toward low complexity. In terms of domain architecture, SH2 spans 151–241 (WFHSMISREN…GLCHRLVTPI (91 aa)). Residues 283–535 (IDVGDTIGHG…GQVLQRLTTI (253 aa)) enclose the Protein kinase domain. ATP-binding positions include 289–297 (IGHGEFGDV) and K310. The Proton acceptor role is filled by D403.

Belongs to the protein kinase superfamily. Tyr protein kinase family. CSK subfamily. It depends on Mg(2+) as a cofactor. The cofactor is Mn(2+). Expressed predominantly in pharyngeal muscles in procorpus, metacorpus and terminal bulb. Expressed also in some neurons (ASE, ADF, AVA, AUA, RMDV and BAG) in the head region, anchor cell, vulva, cells around anus, body wall muscle and gondal distal tip cells.

The enzyme catalyses L-tyrosyl-[protein] + ATP = O-phospho-L-tyrosyl-[protein] + ADP + H(+). In terms of biological role, non-receptor tyrosine-protein kinase which plays a role in pharynx function by regulating pumping and the orientation of pharyngeal muscle fibers, independently of src-1 and src-2. May phosphorylate and thereby negatively regulate src-1 and src-2 activities. This Caenorhabditis elegans protein is Tyrosine-protein kinase csk-1.